A 60-amino-acid chain; its full sequence is MAVPKQKRSRSRTHHKRAKIYKAFSVPVSVCPNCGAPKLPHRVCLNCGHYGKKQVFEVAE.

It belongs to the bacterial ribosomal protein bL32 family.

This Thermosipho melanesiensis (strain DSM 12029 / CIP 104789 / BI429) protein is Large ribosomal subunit protein bL32.